A 349-amino-acid chain; its full sequence is Zinc-type alcohol dehydrogenase-like protein PB24D3.08c (349 aa).

The protein belongs to the zinc-containing alcohol dehydrogenase family. Quinone oxidoreductase subfamily.

The protein resides in the cytoplasm. Its subcellular location is the nucleus. The polypeptide is Zinc-type alcohol dehydrogenase-like protein PB24D3.08c (Schizosaccharomyces pombe (strain 972 / ATCC 24843) (Fission yeast)).